Consider the following 266-residue polypeptide: Indole-3-glycerol phosphate synthase (266 aa).

This sequence belongs to the TrpC family.

It carries out the reaction 1-(2-carboxyphenylamino)-1-deoxy-D-ribulose 5-phosphate + H(+) = (1S,2R)-1-C-(indol-3-yl)glycerol 3-phosphate + CO2 + H2O. It functions in the pathway amino-acid biosynthesis; L-tryptophan biosynthesis; L-tryptophan from chorismate: step 4/5. The protein is Indole-3-glycerol phosphate synthase of Variovorax paradoxus (strain S110).